Consider the following 351-residue polypeptide: 4-hydroxy-3-methylbut-2-enyl diphosphate reductase (351 aa).

Cys-18 lines the [4Fe-4S] cluster pocket. 2 residues coordinate (2E)-4-hydroxy-3-methylbut-2-enyl diphosphate: His-47 and His-83. Residues His-47 and His-83 each coordinate dimethylallyl diphosphate. Isopentenyl diphosphate is bound by residues His-47 and His-83. Cys-105 is a [4Fe-4S] cluster binding site. Residue His-133 participates in (2E)-4-hydroxy-3-methylbut-2-enyl diphosphate binding. His-133 is a binding site for dimethylallyl diphosphate. His-133 contacts isopentenyl diphosphate. The active-site Proton donor is Glu-135. Thr-174 contacts (2E)-4-hydroxy-3-methylbut-2-enyl diphosphate. [4Fe-4S] cluster is bound at residue Cys-204. Residues Ser-232, Ser-233, Asn-234, and Ser-277 each coordinate (2E)-4-hydroxy-3-methylbut-2-enyl diphosphate. Dimethylallyl diphosphate is bound by residues Ser-232, Ser-233, Asn-234, and Ser-277. Ser-232, Ser-233, Asn-234, and Ser-277 together coordinate isopentenyl diphosphate.

This sequence belongs to the IspH family. The cofactor is [4Fe-4S] cluster.

It catalyses the reaction isopentenyl diphosphate + 2 oxidized [2Fe-2S]-[ferredoxin] + H2O = (2E)-4-hydroxy-3-methylbut-2-enyl diphosphate + 2 reduced [2Fe-2S]-[ferredoxin] + 2 H(+). The catalysed reaction is dimethylallyl diphosphate + 2 oxidized [2Fe-2S]-[ferredoxin] + H2O = (2E)-4-hydroxy-3-methylbut-2-enyl diphosphate + 2 reduced [2Fe-2S]-[ferredoxin] + 2 H(+). It participates in isoprenoid biosynthesis; dimethylallyl diphosphate biosynthesis; dimethylallyl diphosphate from (2E)-4-hydroxy-3-methylbutenyl diphosphate: step 1/1. The protein operates within isoprenoid biosynthesis; isopentenyl diphosphate biosynthesis via DXP pathway; isopentenyl diphosphate from 1-deoxy-D-xylulose 5-phosphate: step 6/6. In terms of biological role, catalyzes the conversion of 1-hydroxy-2-methyl-2-(E)-butenyl 4-diphosphate (HMBPP) into a mixture of isopentenyl diphosphate (IPP) and dimethylallyl diphosphate (DMAPP). Acts in the terminal step of the DOXP/MEP pathway for isoprenoid precursor biosynthesis. The chain is 4-hydroxy-3-methylbut-2-enyl diphosphate reductase from Bartonella tribocorum (strain CIP 105476 / IBS 506).